Reading from the N-terminus, the 463-residue chain is tRNA-2-methylthio-N(6)-dimethylallyladenosine synthase (463 aa).

In terms of domain architecture, MTTase N-terminal spans 18–136 (RKLYIETYGC…LPNLVGAAEQ (119 aa)). Residues cysteine 27, cysteine 63, cysteine 100, cysteine 174, cysteine 178, and cysteine 181 each contribute to the [4Fe-4S] cluster site. The Radical SAM core domain occupies 160–392 (GGVHINGFVS…IALQNRLSEE (233 aa)). One can recognise a TRAM domain in the interval 395–458 (KRDIGKTFEV…SATLFGEVVE (64 aa)).

Belongs to the methylthiotransferase family. MiaB subfamily. In terms of assembly, monomer. The cofactor is [4Fe-4S] cluster.

The protein localises to the cytoplasm. It catalyses the reaction N(6)-dimethylallyladenosine(37) in tRNA + (sulfur carrier)-SH + AH2 + 2 S-adenosyl-L-methionine = 2-methylsulfanyl-N(6)-dimethylallyladenosine(37) in tRNA + (sulfur carrier)-H + 5'-deoxyadenosine + L-methionine + A + S-adenosyl-L-homocysteine + 2 H(+). Catalyzes the methylthiolation of N6-(dimethylallyl)adenosine (i(6)A), leading to the formation of 2-methylthio-N6-(dimethylallyl)adenosine (ms(2)i(6)A) at position 37 in tRNAs that read codons beginning with uridine. This Porphyromonas gingivalis (strain ATCC BAA-308 / W83) protein is tRNA-2-methylthio-N(6)-dimethylallyladenosine synthase.